Reading from the N-terminus, the 67-residue chain is uncharacterized protein (67 aa).

A helical transmembrane segment spans residues 12 to 34; that stretch reads YYYAHQTVCITSTGFALCFVVQA.

Its subcellular location is the membrane. This is an uncharacterized protein from Saccharomyces cerevisiae (strain ATCC 204508 / S288c) (Baker's yeast).